We begin with the raw amino-acid sequence, 466 residues long: Asparagine--tRNA ligase (466 aa).

It belongs to the class-II aminoacyl-tRNA synthetase family. Homodimer.

It localises to the cytoplasm. It carries out the reaction tRNA(Asn) + L-asparagine + ATP = L-asparaginyl-tRNA(Asn) + AMP + diphosphate + H(+). The polypeptide is Asparagine--tRNA ligase (Photorhabdus laumondii subsp. laumondii (strain DSM 15139 / CIP 105565 / TT01) (Photorhabdus luminescens subsp. laumondii)).